Here is a 315-residue protein sequence, read N- to C-terminus: tRNA dimethylallyltransferase (315 aa).

18–25 is an ATP binding site; it reads GPTASGKT. 20 to 25 contacts substrate; the sequence is TASGKT. 3 interaction with substrate tRNA regions span residues 43-46, 167-171, and 248-253; these read DSAL, QRLSR, and RCVGYR.

The protein belongs to the IPP transferase family. In terms of assembly, monomer. Mg(2+) serves as cofactor.

It carries out the reaction adenosine(37) in tRNA + dimethylallyl diphosphate = N(6)-dimethylallyladenosine(37) in tRNA + diphosphate. Functionally, catalyzes the transfer of a dimethylallyl group onto the adenine at position 37 in tRNAs that read codons beginning with uridine, leading to the formation of N6-(dimethylallyl)adenosine (i(6)A). The polypeptide is tRNA dimethylallyltransferase (Pseudoalteromonas atlantica (strain T6c / ATCC BAA-1087)).